The following is a 262-amino-acid chain: Nurim (262 aa).

Residues 1-4 (MAPA) lie on the Nuclear side of the membrane. The helical transmembrane segment at 5 to 28 (LLLVPAALASFILAFGTGVEFVRF) threads the bilayer. The Perinuclear space portion of the chain corresponds to 29–58 (TSLRPLLGGIPESGGPDARHGWLAALQDRS). The chain crosses the membrane as a helical span at residues 59–80 (ILASLAWDLCLLLLFVVQHSLM). Residues 81–97 (ATEAVKAWTSRYFGVLQ) lie on the Nuclear side of the membrane. A helical membrane pass occupies residues 98–114 (RSLYVACTALALQLVMR). Residues 115-133 (YWETTPRGPVLWEARAEPW) are Perinuclear space-facing. A helical transmembrane segment spans residues 134 to 164 (ATWVPLLCFVLHVVSWLLIFSILLVFDYAEL). The Nuclear portion of the chain corresponds to 165–191 (MGLKQVYYHVLGLGEPLSLKSPRALRL). The chain crosses the membrane as a helical span at residues 192–210 (FSHLRHPVCVELLTVLWVV). The Perinuclear space segment spans residues 211 to 216 (PTLGTD). The chain crosses the membrane as a helical span at residues 217–234 (RLLLALLFTLYLGLAHGL). At 235–262 (DQQDLRYLRSQLQRKLHLLSRPQDGEAE) the chain is on the nuclear side.

It belongs to the nurim family.

Its subcellular location is the nucleus inner membrane. The protein is Nurim (Nrm) of Mus musculus (Mouse).